A 196-amino-acid polypeptide reads, in one-letter code: Large ribosomal subunit protein bL25 (196 aa).

The interval 177 to 196 is disordered; the sequence is VISIAPPKKDAEAETESAAG.

This sequence belongs to the bacterial ribosomal protein bL25 family. CTC subfamily. As to quaternary structure, part of the 50S ribosomal subunit; part of the 5S rRNA/L5/L18/L25 subcomplex. Contacts the 5S rRNA. Binds to the 5S rRNA independently of L5 and L18.

This is one of the proteins that binds to the 5S RNA in the ribosome where it forms part of the central protuberance. In Chlorobium limicola (strain DSM 245 / NBRC 103803 / 6330), this protein is Large ribosomal subunit protein bL25.